The following is an 891-amino-acid chain: DNA mismatch repair protein MutS (891 aa).

Gly-646 to Ser-653 lines the ATP pocket.

It belongs to the DNA mismatch repair MutS family.

Its function is as follows. This protein is involved in the repair of mismatches in DNA. It is possible that it carries out the mismatch recognition step. This protein has a weak ATPase activity. This Rickettsia massiliae (strain Mtu5) protein is DNA mismatch repair protein MutS.